We begin with the raw amino-acid sequence, 282 residues long: Lipoyl synthase (282 aa).

Residues Cys37, Cys42, Cys48, Cys63, Cys67, Cys70, and Ser275 each coordinate [4Fe-4S] cluster. The Radical SAM core domain occupies 49–264 (WSRGTATFMI…RLVGIEKGFR (216 aa)).

This sequence belongs to the radical SAM superfamily. Lipoyl synthase family. The cofactor is [4Fe-4S] cluster.

It is found in the cytoplasm. The catalysed reaction is [[Fe-S] cluster scaffold protein carrying a second [4Fe-4S](2+) cluster] + N(6)-octanoyl-L-lysyl-[protein] + 2 oxidized [2Fe-2S]-[ferredoxin] + 2 S-adenosyl-L-methionine + 4 H(+) = [[Fe-S] cluster scaffold protein] + N(6)-[(R)-dihydrolipoyl]-L-lysyl-[protein] + 4 Fe(3+) + 2 hydrogen sulfide + 2 5'-deoxyadenosine + 2 L-methionine + 2 reduced [2Fe-2S]-[ferredoxin]. It functions in the pathway protein modification; protein lipoylation via endogenous pathway; protein N(6)-(lipoyl)lysine from octanoyl-[acyl-carrier-protein]: step 2/2. Its function is as follows. Catalyzes the radical-mediated insertion of two sulfur atoms into the C-6 and C-8 positions of the octanoyl moiety bound to the lipoyl domains of lipoate-dependent enzymes, thereby converting the octanoylated domains into lipoylated derivatives. This is Lipoyl synthase from Porphyromonas gingivalis (strain ATCC 33277 / DSM 20709 / CIP 103683 / JCM 12257 / NCTC 11834 / 2561).